The sequence spans 439 residues: Glucose-6-phosphate 1-dehydrogenase (439 aa).

Position 100 (lysine 100) interacts with NADP(+). Substrate is bound by residues histidine 130, lysine 134, glutamate 168, and aspartate 187. Histidine 192 serves as the catalytic Proton acceptor. Residue lysine 288 coordinates substrate.

Belongs to the glucose-6-phosphate dehydrogenase family.

The enzyme catalyses D-glucose 6-phosphate + NADP(+) = 6-phospho-D-glucono-1,5-lactone + NADPH + H(+). Its pathway is carbohydrate degradation; pentose phosphate pathway; D-ribulose 5-phosphate from D-glucose 6-phosphate (oxidative stage): step 1/3. Functionally, catalyzes the oxidation of glucose 6-phosphate to 6-phosphogluconolactone. This Chlamydia trachomatis serovar D (strain ATCC VR-885 / DSM 19411 / UW-3/Cx) protein is Glucose-6-phosphate 1-dehydrogenase.